The sequence spans 146 residues: Ribosome-binding factor A (146 aa).

The disordered stretch occupies residues 113 to 146; it reads IRDEREAQEPAQDPAQDSSQDASVEASDAPDKAE.

Belongs to the RbfA family. Monomer. Binds 30S ribosomal subunits, but not 50S ribosomal subunits or 70S ribosomes.

It is found in the cytoplasm. Functionally, one of several proteins that assist in the late maturation steps of the functional core of the 30S ribosomal subunit. Associates with free 30S ribosomal subunits (but not with 30S subunits that are part of 70S ribosomes or polysomes). Required for efficient processing of 16S rRNA. May interact with the 5'-terminal helix region of 16S rRNA. The polypeptide is Ribosome-binding factor A (Gemmatimonas aurantiaca (strain DSM 14586 / JCM 11422 / NBRC 100505 / T-27)).